The chain runs to 181 residues: Oligoribonuclease (181 aa).

The Exonuclease domain maps to 8 to 171 (LIWIDLEMTG…QDIQESIAEL (164 aa)). Tyr-129 is a catalytic residue.

It belongs to the oligoribonuclease family.

Its subcellular location is the cytoplasm. 3'-to-5' exoribonuclease specific for small oligoribonucleotides. The sequence is that of Oligoribonuclease from Shewanella sp. (strain MR-4).